A 205-amino-acid chain; its full sequence is Small ribosomal subunit protein uS4 (205 aa).

An S4 RNA-binding domain is found at 91–149; sequence MRLDALVLRAAFARSISQARQLVVHRHILVDGKLVDRPSYSVSPGQTVKVKPKSVPLDP.

This sequence belongs to the universal ribosomal protein uS4 family. As to quaternary structure, part of the 30S ribosomal subunit. Contacts protein S5. The interaction surface between S4 and S5 is involved in control of translational fidelity.

Its function is as follows. One of the primary rRNA binding proteins, it binds directly to 16S rRNA where it nucleates assembly of the body of the 30S subunit. With S5 and S12 plays an important role in translational accuracy. The chain is Small ribosomal subunit protein uS4 from Tropheryma whipplei (strain TW08/27) (Whipple's bacillus).